Reading from the N-terminus, the 334-residue chain is MLALAKILLISTLFYSLLSGSHGKENQDINTTQNIAEVFKTMENKPISLESEANLNSDKENITTSNLKASHSPPLNLPNNSHGITDFSSNSSAEHSLGSLKPTSTISTSPPLIHSFVSKVPWNAPIADEDLLPISAHPNATPALSSENFTWSLVNDTVKTPDNSSITVSILSSEPTSPSVTPLIVEPSGWLTTNSDSFTGFTPYQEKTTLQPTLKFTNNSKLFPNTSDPQKENRNTGIVFGAILGAILGVSLLTLVGYLLCGKRKTDSFSHRRLYDDRNEPVLRLDNAPEPYDVSFGNSSYYNPTLNDSAMPESEENARDGIPMDDIPPLRTSV.

The signal sequence occupies residues 1–23; the sequence is MLALAKILLISTLFYSLLSGSHG. The Extracellular portion of the chain corresponds to 24-236; the sequence is KENQDINTTQ…SDPQKENRNT (213 aa). N-linked (GlcNAc...) asparagine glycans are attached at residues asparagine 30, asparagine 61, asparagine 79, asparagine 90, asparagine 148, asparagine 155, asparagine 163, asparagine 218, and asparagine 225. The interval 64–104 is disordered; it reads TSNLKASHSPPLNLPNNSHGITDFSSNSSAEHSLGSLKPTS. Positions 77–94 are enriched in polar residues; that stretch reads LPNNSHGITDFSSNSSAE. Residues 237–257 form a helical membrane-spanning segment; it reads GIVFGAILGAILGVSLLTLVG. At 258–334 the chain is on the cytoplasmic side; that stretch reads YLLCGKRKTD…DDIPPLRTSV (77 aa). The segment at 304-334 is disordered; the sequence is PTLNDSAMPESEENARDGIPMDDIPPLRTSV.

In terms of processing, highly glycosylated (N- and O-linked carbohydrates). As to expression, expressed in spleen, thymus, prostate, testis, ovary, small intestine, colon, peripheral blood leukocyte, bone marrow, lymph node and lung.

It is found in the cell membrane. It localises to the secreted. May play a role in the cell adhesion to the extracellular matrix. The polypeptide is Mucin-15 (MUC15) (Homo sapiens (Human)).